Consider the following 654-residue polypeptide: DNA mismatch repair protein MutL (654 aa).

A disordered region spans residues 358–437; it reads KEHVRETMQQ…ADRRTDESLP (80 aa). A compositionally biased stretch (polar residues) spans 384–394; sequence TSIGNSWSPSH. Residues 413–434 are compositionally biased toward basic and acidic residues; the sequence is RNERVETNTEEKYEQADRRTDE.

This sequence belongs to the DNA mismatch repair MutL/HexB family.

Its function is as follows. This protein is involved in the repair of mismatches in DNA. It is required for dam-dependent methyl-directed DNA mismatch repair. May act as a 'molecular matchmaker', a protein that promotes the formation of a stable complex between two or more DNA-binding proteins in an ATP-dependent manner without itself being part of a final effector complex. The chain is DNA mismatch repair protein MutL from Shouchella clausii (strain KSM-K16) (Alkalihalobacillus clausii).